The sequence spans 365 residues: tRNA/tmRNA (uracil-C(5))-methyltransferase (365 aa).

Residues Q189, Y217, N222, E238, and D298 each contribute to the S-adenosyl-L-methionine site. The Nucleophile role is filled by C323. Residue E357 is the Proton acceptor of the active site.

The protein belongs to the class I-like SAM-binding methyltransferase superfamily. RNA M5U methyltransferase family. TrmA subfamily.

It carries out the reaction uridine(54) in tRNA + S-adenosyl-L-methionine = 5-methyluridine(54) in tRNA + S-adenosyl-L-homocysteine + H(+). The catalysed reaction is uridine(341) in tmRNA + S-adenosyl-L-methionine = 5-methyluridine(341) in tmRNA + S-adenosyl-L-homocysteine + H(+). Dual-specificity methyltransferase that catalyzes the formation of 5-methyluridine at position 54 (m5U54) in all tRNAs, and that of position 341 (m5U341) in tmRNA (transfer-mRNA). The sequence is that of tRNA/tmRNA (uracil-C(5))-methyltransferase from Shewanella frigidimarina (strain NCIMB 400).